Reading from the N-terminus, the 252-residue chain is Triosephosphate isomerase (252 aa).

9-11 (NWK) contributes to the substrate binding site. The active-site Electrophile is H95. The active-site Proton acceptor is E167. Residues G173, S213, and 234 to 235 (GG) contribute to the substrate site.

This sequence belongs to the triosephosphate isomerase family. As to quaternary structure, homodimer.

It localises to the cytoplasm. The enzyme catalyses D-glyceraldehyde 3-phosphate = dihydroxyacetone phosphate. It functions in the pathway carbohydrate biosynthesis; gluconeogenesis. Its pathway is carbohydrate degradation; glycolysis; D-glyceraldehyde 3-phosphate from glycerone phosphate: step 1/1. Its function is as follows. Involved in the gluconeogenesis. Catalyzes stereospecifically the conversion of dihydroxyacetone phosphate (DHAP) to D-glyceraldehyde-3-phosphate (G3P). The chain is Triosephosphate isomerase from Lactiplantibacillus plantarum (strain ATCC BAA-793 / NCIMB 8826 / WCFS1) (Lactobacillus plantarum).